Reading from the N-terminus, the 304-residue chain is uncharacterized protein (304 aa).

The span at 1–10 (MLWAHRKKRK) shows a compositional bias: basic residues. Residues 1–28 (MLWAHRKKRKAATETTEDKPLESHRAND) form a disordered region. The span at 16–27 (TEDKPLESHRAN) shows a compositional bias: basic and acidic residues. Ser39 is subject to Phosphoserine. Residues 91–101 (KQKISGSSMTK) show a composition bias toward polar residues. 3 disordered regions span residues 91–115 (KQKISGSSMTKEMQRESGKSPSMED), 138–160 (SMLQRSTTHRRKGHAESRNISPE), and 190–304 (SHTV…IYGS). Residues 151–160 (HAESRNISPE) show a composition bias toward basic and acidic residues. Phosphoserine is present on Ser158. Positions 195–206 (SQSRHSNQSHHS) are enriched in low complexity. The span at 208–223 (PSHQSNQSHPVYSSYQ) shows a compositional bias: polar residues. Residues 229-248 (HLSPQSYPSYSSHQSHPGHS) show a composition bias toward low complexity. A compositionally biased stretch (polar residues) spans 249-263 (NHQGHSGLSSHQTHL). Over residues 264 to 292 (GHSNHQGHPGHSSHQSHQGQPGHPSHQSH) the composition is skewed to low complexity.

This is an uncharacterized protein from Mus musculus (Mouse).